Here is a 197-residue protein sequence, read N- to C-terminus: Thymidine kinase (197 aa).

Residues 9 to 16 (SAMDAGKT) and 87 to 90 (DEIH) each bind ATP. Glu88 functions as the Proton acceptor in the catalytic mechanism. Zn(2+) is bound by residues Cys145, Cys147, Cys187, and His190.

This sequence belongs to the thymidine kinase family. Homotetramer.

The protein resides in the cytoplasm. It catalyses the reaction thymidine + ATP = dTMP + ADP + H(+). In Francisella tularensis subsp. tularensis (strain SCHU S4 / Schu 4), this protein is Thymidine kinase.